The sequence spans 261 residues: tRNA pseudouridine synthase A (261 aa).

Asp-52 functions as the Nucleophile in the catalytic mechanism. A substrate-binding site is contributed by Tyr-110.

The protein belongs to the tRNA pseudouridine synthase TruA family. Homodimer.

It catalyses the reaction uridine(38/39/40) in tRNA = pseudouridine(38/39/40) in tRNA. Its function is as follows. Formation of pseudouridine at positions 38, 39 and 40 in the anticodon stem and loop of transfer RNAs. The protein is tRNA pseudouridine synthase A of Blochmanniella pennsylvanica (strain BPEN).